The primary structure comprises 27 residues: Caerulein precursor fragment R8 (27 aa).

As to expression, expressed by the skin glands.

It localises to the secreted. In terms of biological role, antimicrobial peptide. In Xenopus ruwenzoriensis (Uganda clawed frog), this protein is Caerulein precursor fragment R8.